The chain runs to 160 residues: RxLR effector protein PexRD44 (160 aa).

Positions 1–21 (MRLLLWVLISMLSIALSSCAA) are cleaved as a signal peptide. Positions 54–76 (RFLRGESSKIVNLKQEEGVFEER) match the RxLR-dEER motif.

It belongs to the RxLR effector family.

It is found in the secreted. Its subcellular location is the host cell membrane. It localises to the host nucleus. The protein resides in the host nucleolus. Effector that is involved in host plant infection. Contributes to virulence during the early infection stage, by inhibiting plant defense responses induced by both PAMP-triggered immunity (PTI) and effector-triggered immunity (ETI). The chain is RxLR effector protein PexRD44 from Phytophthora infestans (strain T30-4) (Potato late blight agent).